The primary structure comprises 757 residues: Protein transport protein SEC23-2 (757 aa).

4 residues coordinate Zn(2+): cysteine 56, cysteine 61, cysteine 80, and cysteine 83.

Belongs to the SEC23/SEC24 family. SEC23 subfamily. In terms of assembly, the COPII coat is composed of at least 5 proteins: the SEC23/24 complex, the SEC13/31 complex, and the protein SAR1.

Its subcellular location is the cytoplasm. The protein resides in the cytoplasmic vesicle. It is found in the COPII-coated vesicle membrane. The protein localises to the endoplasmic reticulum membrane. It localises to the golgi apparatus membrane. Its function is as follows. Component of the coat protein complex II (COPII) which promotes the formation of transport vesicles from the endoplasmic reticulum (ER). The coat has two main functions, the physical deformation of the endoplasmic reticulum membrane into vesicles and the selection of cargo molecules. The chain is Protein transport protein SEC23-2 (SEC232) from Candida glabrata (strain ATCC 2001 / BCRC 20586 / JCM 3761 / NBRC 0622 / NRRL Y-65 / CBS 138) (Yeast).